A 336-amino-acid polypeptide reads, in one-letter code: Protein-arginine N-acetylglucosaminyltransferase SseK1 (336 aa).

An N-beta-linked (GlcNAc) arginine; by autocatalysis glycan is attached at Arg24. Residues Gln50–Phe52 and Tyr74 each bind UDP-N-acetyl-alpha-D-glucosamine. N-beta-linked (GlcNAc) arginine; by autocatalysis glycosylation is present at Arg152. A DXD motif motif is present at residues Asp223–Asp225. Residue Ala224 to Asp225 coordinates UDP-N-acetyl-alpha-D-glucosamine. Mn(2+) is bound at residue Asp225. Catalysis depends on Glu255, which acts as the Proton acceptor. Mn(2+) is bound by residues Asn322 and Ser324. Ser324 and Ser329 together coordinate UDP-N-acetyl-alpha-D-glucosamine. An N-beta-linked (GlcNAc) arginine; by autocatalysis glycan is attached at Arg333.

This sequence belongs to the glycosyltransferase NleB family. Mn(2+) serves as cofactor. In terms of processing, auto-glycosylated: arginine GlcNAcylation is required for activity toward death domain-containing host target proteins.

It localises to the secreted. The protein resides in the host cytoplasm. Its subcellular location is the host cytosol. It carries out the reaction L-arginyl-[protein] + UDP-N-acetyl-alpha-D-glucosamine = N(omega)-(N-acetyl-beta-D-glucosaminyl)-L-arginyl-[protein] + UDP + H(+). Protein-arginine N-acetylglucosaminyltransferase activity is inhibited by 100066N compound (flavone analog) and 102644N compound (a substituted isoxazole). Protein-arginine N-acetylglucosaminyltransferase effector that disrupts TNF signaling in infected cells, including NF-kappa-B signaling, apoptosis and necroptosis. Acts by catalyzing the transfer of a single N-acetylglucosamine (GlcNAc) to a conserved arginine residue in the death domain of host proteins TRADD and, to a lower extent, FADD: arginine GlcNAcylation prevents homotypic/heterotypic death domain interactions and assembly of the oligomeric TNF-alpha receptor complex, thereby disrupting TNF signaling. Also acts on host proteins without a death domain: catalyzes arginine GlcNAcylation of host GAPDH protein, thereby preventing GAPDH interaction with TRAF2, leading to inhibit NF-kappa-B signaling. Catalyzes GlcNAcylation of host tubulin-folding cofactor TBCB, thereby promoting microtubule stability. Also mediates auto-GlcNAcylation, which is required for activity toward death domain-containing host target proteins. The chain is Protein-arginine N-acetylglucosaminyltransferase SseK1 from Salmonella enteritidis (strain 2009K0958).